The following is a 179-amino-acid chain: Apolipophorin-3b (179 aa).

Positions 1–16 are cleaved as a signal peptide; sequence MNTLLAVLMLAVAAQA. Repeats lie at residues 30–40, 41–52, 53–60, 61–78, 79–89, 90–99, 100–113, 114–127, 128–140, 141–151, 152–165, and 166–179; these read VQQLNHTIVNA, AHELHETLGLPT, PDEALNLL, TEQA…TTSL, KQEAEKHQGSV, AEQLNRFARN, LNNS…SAQP, ADQL…LTNV, GHQW…RPSV, AQEAWAPVQSA, LQEA…AAAN, and LQNS…KPAN. Residue Asn34 is glycosylated (N-linked (GlcNAc...) asparagine). N-linked (GlcNAc...) asparagine glycosylation occurs at Asn101. Residues 152 to 179 are disordered; that stretch reads LQEAAEKTKEAAANLQNSIQSAVQKPAN. A compositionally biased stretch (polar residues) spans 165-179; the sequence is NLQNSIQSAVQKPAN.

Belongs to the insect apolipophorin-3 family. In terms of assembly, equilibrium between a soluble monomer and a bound lipoprotein form. Apolipophorin-3 associates with lipophorin during lipid loading until each particle contains 14 molecules of apolipophorin-3 in L.migratoria (5 molecules of apolipophorin-3a and 9 of apolipophorin-3b). In terms of tissue distribution, hemolymph.

It is found in the secreted. Assists in the loading of diacylglycerol, generated from triacylglycerol stores in the fat body through the action of adipokinetic hormone, into lipophorin, the hemolymph lipoprotein. It increases the lipid carrying capacity of lipophorin by covering the expanding hydrophobic surface resulting from diacylglycerol uptake. It thus plays a critical role in the transport of lipids during flight in several species of insects. The polypeptide is Apolipophorin-3b (Locusta migratoria (Migratory locust)).